We begin with the raw amino-acid sequence, 549 residues long: Glucose-6-phosphate isomerase (549 aa).

Catalysis depends on Glu355, which acts as the Proton donor. Residues His386 and Lys514 contribute to the active site.

The protein belongs to the GPI family.

It localises to the cytoplasm. The catalysed reaction is alpha-D-glucose 6-phosphate = beta-D-fructose 6-phosphate. It functions in the pathway carbohydrate biosynthesis; gluconeogenesis. The protein operates within carbohydrate degradation; glycolysis; D-glyceraldehyde 3-phosphate and glycerone phosphate from D-glucose: step 2/4. Functionally, catalyzes the reversible isomerization of glucose-6-phosphate to fructose-6-phosphate. This Sodalis glossinidius (strain morsitans) protein is Glucose-6-phosphate isomerase.